The following is a 408-amino-acid chain: DNA primase DnaG (408 aa).

In terms of domain architecture, Toprim spans 171 to 250 (DAIIIVEGRA…AYSPRGKSVE (80 aa)). Mg(2+)-binding residues include Glu-177, Asp-219, and Asp-221. Positions 276-323 (AEENVERLPPSAAPAEVRAPAGAGRTSEGERPPRREWDSKPPSTLGEH) are disordered. Over residues 284-298 (PPSAAPAEVRAPAGA) the composition is skewed to low complexity. The segment covering 302 to 314 (SEGERPPRREWDS) has biased composition (basic and acidic residues).

This sequence belongs to the archaeal DnaG primase family. As to quaternary structure, forms a ternary complex with MCM helicase and DNA. The cofactor is Mg(2+).

The catalysed reaction is ssDNA + n NTP = ssDNA/pppN(pN)n-1 hybrid + (n-1) diphosphate.. RNA polymerase that catalyzes the synthesis of short RNA molecules used as primers for DNA polymerase during DNA replication. The chain is DNA primase DnaG from Methanoculleus marisnigri (strain ATCC 35101 / DSM 1498 / JR1).